The sequence spans 251 residues: MSFYVVVPARYASTRLPGKPLADIAGKTMVERVAQRCQQSDADQIYVATDDRRIADVLGDTVPVVMTREDHPSGTDRLQEVATKLALADDDIIVNVQGDEPLIPPAVINQVAANLAANPDCQMATLCEAIENSDDLFNPNVVKAVFDNRGKALYFSRAPVPWHRDAFADGQQDLSGGQWWRHIGIYAYRVAFLHQYVQWQPATLEKLESLEQLRAMANGVAIHVEPACEVVPGGVDTQTDLERLRAQLGGQ.

It belongs to the KdsB family.

It localises to the cytoplasm. The catalysed reaction is 3-deoxy-alpha-D-manno-oct-2-ulosonate + CTP = CMP-3-deoxy-beta-D-manno-octulosonate + diphosphate. It functions in the pathway nucleotide-sugar biosynthesis; CMP-3-deoxy-D-manno-octulosonate biosynthesis; CMP-3-deoxy-D-manno-octulosonate from 3-deoxy-D-manno-octulosonate and CTP: step 1/1. The protein operates within bacterial outer membrane biogenesis; lipopolysaccharide biosynthesis. Activates KDO (a required 8-carbon sugar) for incorporation into bacterial lipopolysaccharide in Gram-negative bacteria. The chain is 3-deoxy-manno-octulosonate cytidylyltransferase from Alcanivorax borkumensis (strain ATCC 700651 / DSM 11573 / NCIMB 13689 / SK2).